The sequence spans 142 residues: Protein lin-32 (142 aa).

Residues 30–48 (PLQSPNFSLDSPNYPDSLS) show a composition bias toward polar residues. The tract at residues 30-66 (PLQSPNFSLDSPNYPDSLSNGGGKDDKKKCRRYKTPS) is disordered. The bHLH domain occupies 72–124 (MRRSAANERERRRMNTLNVAYDELREVLPEIDSGKKLSKFETLQMAQKYIECL).

Forms a heterodimer with hlh-2. Expressed in PVD motor neurons.

It is found in the nucleus. Probable transcription factor which binds the E box motif 5'-CA[TC][AG]TG-3'. Essential for the specification of the neuroblast cell fate in the development of peripheral sense organs. Its role in the generation of sensory neurons may be through positively regulating the expression of the zinc finger protein ztf-11 during postdeirid neurogenesis. Required for specification of cell fate, acting in concert with lin-32, in the development of the male-specific genital sensilla (simple sense organs) known as rays. Involved in regulating glial specification, perhaps by suppressing a glial fate in different lineages during early embryogenesis. This chain is Protein lin-32, found in Caenorhabditis elegans.